Reading from the N-terminus, the 387-residue chain is ATP-dependent Clp protease proteolytic subunit-related protein 1, chloroplastic (387 aa).

Residues 1 to 41 (MATALVSPLTSQLNHEAVCSKFVLPKSPFMSGSKLFSSNMP) constitute a chloroplast transit peptide. Residues 355 to 365 (QDSSFEKRDYD) show a composition bias toward basic and acidic residues. Positions 355-387 (QDSSFEKRDYDGTLAQRAMRPGGGSPAAPAGLR) are disordered.

This sequence belongs to the peptidase S14 family. As to quaternary structure, component of the chloroplastic Clp protease core complex which consist of at least 16 proteins: CLPP4 (3 copies), CLPP5 (3 copies), CLPR4 (2 copies), ClpP1 (1 copy), CLPP6 (1 copy), CLPR2 (1 copy), CLPT1 (1 copy), CLPT2 (1 copy) and 3 copies of CLPP3 and/or CLPR1 and/or CLPR3. The core complex is organized in two heptameric rings, one containing CLPP3,4,5,6 in a 1:2:3:1 ratio and the other CLPP1 and CLPR1,2,3,4 in a 3:1:1:1:1 ratio.

It is found in the plastid. Its subcellular location is the chloroplast stroma. Functionally, required for chloroplast development and differentiation. The chain is ATP-dependent Clp protease proteolytic subunit-related protein 1, chloroplastic from Arabidopsis thaliana (Mouse-ear cress).